A 288-amino-acid polypeptide reads, in one-letter code: Eukaryotic translation initiation factor 3 subunit G (288 aa).

2 disordered regions span residues 1-33 (MSKL…NKDG) and 156-197 (DEPT…GGER). The region spanning 208 to 286 (ATLRVTNVSE…LILRVEFAKR (79 aa)) is the RRM domain.

It belongs to the eIF-3 subunit G family. As to quaternary structure, component of the eukaryotic translation initiation factor 3 (eIF-3) complex.

It localises to the cytoplasm. Its function is as follows. RNA-binding component of the eukaryotic translation initiation factor 3 (eIF-3) complex, which is involved in protein synthesis of a specialized repertoire of mRNAs and, together with other initiation factors, stimulates binding of mRNA and methionyl-tRNAi to the 40S ribosome. The eIF-3 complex specifically targets and initiates translation of a subset of mRNAs involved in cell proliferation. This subunit can bind 18S rRNA. The chain is Eukaryotic translation initiation factor 3 subunit G (tif35) from Aspergillus niger (strain ATCC MYA-4892 / CBS 513.88 / FGSC A1513).